The following is a 69-amino-acid chain: Sec-independent protein translocase protein TatA (69 aa).

A helical membrane pass occupies residues 1–21 (MFGLGGQELVLILLIILLLFG). A disordered region spans residues 48 to 69 (EELNKAVDDTPEKEKKSSSEKS).

This sequence belongs to the TatA/E family. Forms a complex with TatC.

The protein resides in the cell inner membrane. Functionally, part of the twin-arginine translocation (Tat) system that transports large folded proteins containing a characteristic twin-arginine motif in their signal peptide across membranes. TatA could form the protein-conducting channel of the Tat system. This Chlorobium phaeobacteroides (strain BS1) protein is Sec-independent protein translocase protein TatA.